Reading from the N-terminus, the 717-residue chain is uncharacterized protein (717 aa).

A helical transmembrane segment spans residues 19–38 (VFLSTIFVSIIFCLGILFLV).

It to E.coli YtfN.

The protein localises to the membrane. This is an uncharacterized protein from Buchnera aphidicola subsp. Baizongia pistaciae (strain Bp).